We begin with the raw amino-acid sequence, 368 residues long: N-acetylneuraminate epimerase (368 aa).

An N-terminal signal peptide occupies residues 1 to 19 (MNKTITALTIIMASFATNA). 7 Kelch repeats span residues 40 to 84 (TVYI…AFID), 86 to 137 (NLYV…FVHN), 139 to 173 (KAYV…KINA), 174 to 219 (HYFD…VNKG), 222 to 265 (TWLI…VAGG), 287 to 336 (ENYQ…PWNN), and 338 to 367 (LLII…VTVQ). Residue Glu-228 is the Proton acceptor of the active site.

This sequence belongs to the NanM family. As to quaternary structure, homodimer.

The protein localises to the periplasm. It carries out the reaction N-acetyl-alpha-neuraminate = N-acetyl-beta-neuraminate. Functionally, converts alpha-N-acetylneuranimic acid (Neu5Ac) to the beta-anomer, accelerating the equilibrium between the alpha- and beta-anomers. Probably facilitates sialidase-negative bacteria to compete successfully for limited amounts of extracellular Neu5Ac, which is likely taken up in the beta-anomer. In addition, the rapid removal of sialic acid from solution might be advantageous to the bacterium to damp down host responses. The sequence is that of N-acetylneuraminate epimerase from Escherichia coli O1:K1 / APEC.